We begin with the raw amino-acid sequence, 382 residues long: Chaperone protein DnaJ (382 aa).

Positions 5 to 70 (DYYEVLGVSR…DKKAAYDRYG (66 aa)) constitute a J domain. The CR-type zinc-finger motif lies at 141 to 219 (GVQKTINVPA…CHGAGRVEKE (79 aa)). Residues cysteine 154, cysteine 157, cysteine 171, cysteine 174, cysteine 193, cysteine 196, cysteine 207, and cysteine 210 each coordinate Zn(2+). CXXCXGXG motif repeat units follow at residues 154–161 (CDACKGTG), 171–178 (CPTCSGMG), 193–200 (CPTCNGMG), and 207–214 (CKVCHGAG).

It belongs to the DnaJ family. As to quaternary structure, homodimer. Requires Zn(2+) as cofactor.

The protein resides in the cytoplasm. Its function is as follows. Participates actively in the response to hyperosmotic and heat shock by preventing the aggregation of stress-denatured proteins and by disaggregating proteins, also in an autonomous, DnaK-independent fashion. Unfolded proteins bind initially to DnaJ; upon interaction with the DnaJ-bound protein, DnaK hydrolyzes its bound ATP, resulting in the formation of a stable complex. GrpE releases ADP from DnaK; ATP binding to DnaK triggers the release of the substrate protein, thus completing the reaction cycle. Several rounds of ATP-dependent interactions between DnaJ, DnaK and GrpE are required for fully efficient folding. Also involved, together with DnaK and GrpE, in the DNA replication of plasmids through activation of initiation proteins. This Cereibacter sphaeroides (strain ATCC 17023 / DSM 158 / JCM 6121 / CCUG 31486 / LMG 2827 / NBRC 12203 / NCIMB 8253 / ATH 2.4.1.) (Rhodobacter sphaeroides) protein is Chaperone protein DnaJ.